Here is a 1350-residue protein sequence, read N- to C-terminus: Probable serine/threonine-protein kinase irlE (1350 aa).

N37 carries N-linked (GlcNAc...) asparagine glycosylation. A helical membrane pass occupies residues 149-169 (FWEILASCYGTISFIKFFNIF). Residues 731–802 (EAELKEKFEI…NIQQNYENQH (72 aa)) adopt a coiled-coil conformation. Positions 761-771 (LKKKNKLKKQK) are enriched in basic residues. Disordered regions lie at residues 761-795 (LKKKNKLKKQKNQQQQQQAKQQAQQQKQQHQQNIQ) and 807-864 (RKFN…TTNS). The segment covering 772–795 (NQQQQQQAKQQAQQQKQQHQQNIQ) has biased composition (low complexity). The segment covering 809–823 (FNQQTKGRPISPSSI) has biased composition (polar residues). A compositionally biased stretch (low complexity) spans 824–864 (QNQNLNPTLLQNQNQTSNPTPNLESTKKATPTTTTTTTTNS). Residues 903–1166 (KKESNILGRG…LSSVLKHPLF (264 aa)) form the Protein kinase domain. ATP-binding positions include 909–917 (LGRGSNGTL) and K932. Catalysis depends on D1034, which acts as the Proton acceptor. One can recognise a KEN domain in the interval 1169-1346 (SLKKIKFLES…KNSIHFSNDT (178 aa)).

The protein belongs to the protein kinase superfamily. Ser/Thr protein kinase family.

It is found in the membrane. The enzyme catalyses L-seryl-[protein] + ATP = O-phospho-L-seryl-[protein] + ADP + H(+). It carries out the reaction L-threonyl-[protein] + ATP = O-phospho-L-threonyl-[protein] + ADP + H(+). The polypeptide is Probable serine/threonine-protein kinase irlE (irlE) (Dictyostelium discoideum (Social amoeba)).